Consider the following 92-residue polypeptide: Beta-2-microglobulin (92 aa).

The 88-residue stretch at 2 to 89 (PQIQVYSRHP…NHVSMDKPMT (88 aa)) folds into the Ig-like C1-type domain. Cys-22 and Cys-77 are disulfide-bonded.

The protein belongs to the beta-2-microglobulin family. As to quaternary structure, heterodimer of an alpha chain and a beta chain. Beta-2-microglobulin is the beta-chain of major histocompatibility complex class I molecules.

It is found in the secreted. Its function is as follows. Component of the class I major histocompatibility complex (MHC). Involved in the presentation of peptide antigens to the immune system. The sequence is that of Beta-2-microglobulin (B2m) from Mus spretus (Western Mediterranean mouse).